Here is a 192-residue protein sequence, read N- to C-terminus: Ciliary microtubule inner protein 3 (192 aa).

Residues 24 to 108 (RAGAEGGPSL…SGQKVKAPHR (85 aa)) are disordered. Basic residues predominate over residues 55-64 (APRRPPRPRT).

The protein belongs to the CIMIP3-like family. Detected in the sperm flagellum (at protein level).

It localises to the cytoplasm. It is found in the cytoskeleton. The protein resides in the flagellum axoneme. The sequence is that of Ciliary microtubule inner protein 3 from Bos taurus (Bovine).